The following is a 145-amino-acid chain: D-aminoacyl-tRNA deacylase (145 aa).

A Gly-cisPro motif, important for rejection of L-amino acids motif is present at residues Gly-137–Pro-138.

The protein belongs to the DTD family. Homodimer.

The protein localises to the cytoplasm. It catalyses the reaction glycyl-tRNA(Ala) + H2O = tRNA(Ala) + glycine + H(+). The catalysed reaction is a D-aminoacyl-tRNA + H2O = a tRNA + a D-alpha-amino acid + H(+). In terms of biological role, an aminoacyl-tRNA editing enzyme that deacylates mischarged D-aminoacyl-tRNAs. Also deacylates mischarged glycyl-tRNA(Ala), protecting cells against glycine mischarging by AlaRS. Acts via tRNA-based rather than protein-based catalysis; rejects L-amino acids rather than detecting D-amino acids in the active site. By recycling D-aminoacyl-tRNA to D-amino acids and free tRNA molecules, this enzyme counteracts the toxicity associated with the formation of D-aminoacyl-tRNA entities in vivo and helps enforce protein L-homochirality. The protein is D-aminoacyl-tRNA deacylase of Pseudomonas putida (strain ATCC 700007 / DSM 6899 / JCM 31910 / BCRC 17059 / LMG 24140 / F1).